The chain runs to 144 residues: Large ribosomal subunit protein uL15 (144 aa).

Positions 1–54 (MRLNTLSPAPGRVSAKKRVGRGIGSGLGKTAGRGHKGLKSRSGGSVKPGFEGGQ) are disordered. Over residues 21–31 (RGIGSGLGKTA) the composition is skewed to gly residues.

The protein belongs to the universal ribosomal protein uL15 family. As to quaternary structure, part of the 50S ribosomal subunit.

In terms of biological role, binds to the 23S rRNA. The polypeptide is Large ribosomal subunit protein uL15 (Saccharophagus degradans (strain 2-40 / ATCC 43961 / DSM 17024)).